Reading from the N-terminus, the 294-residue chain is 33 kDa chaperonin (294 aa).

2 cysteine pairs are disulfide-bonded: Cys-239-Cys-241 and Cys-272-Cys-275.

The protein belongs to the HSP33 family. In terms of processing, under oxidizing conditions two disulfide bonds are formed involving the reactive cysteines. Under reducing conditions zinc is bound to the reactive cysteines and the protein is inactive.

The protein resides in the cytoplasm. Functionally, redox regulated molecular chaperone. Protects both thermally unfolding and oxidatively damaged proteins from irreversible aggregation. Plays an important role in the bacterial defense system toward oxidative stress. In Listeria innocua serovar 6a (strain ATCC BAA-680 / CLIP 11262), this protein is 33 kDa chaperonin.